Consider the following 218-residue polypeptide: GTP cyclohydrolase 1 (218 aa).

Cys-109, His-112, and Cys-180 together coordinate Zn(2+).

The protein belongs to the GTP cyclohydrolase I family. Toroid-shaped homodecamer, composed of two pentamers of five dimers.

The enzyme catalyses GTP + H2O = 7,8-dihydroneopterin 3'-triphosphate + formate + H(+). It functions in the pathway cofactor biosynthesis; 7,8-dihydroneopterin triphosphate biosynthesis; 7,8-dihydroneopterin triphosphate from GTP: step 1/1. The sequence is that of GTP cyclohydrolase 1 from Actinobacillus pleuropneumoniae serotype 5b (strain L20).